A 560-amino-acid chain; its full sequence is Dihydroxy-acid dehydratase (560 aa).

Asp-80 contacts Mg(2+). Residue Cys-121 participates in [2Fe-2S] cluster binding. Mg(2+) is bound by residues Asp-122 and Lys-123. Lys-123 is modified (N6-carboxylysine). A [2Fe-2S] cluster-binding site is contributed by Cys-194. Glu-447 is a binding site for Mg(2+). Residue Ser-473 is the Proton acceptor of the active site.

Belongs to the IlvD/Edd family. As to quaternary structure, homodimer. [2Fe-2S] cluster serves as cofactor. Requires Mg(2+) as cofactor.

The enzyme catalyses (2R)-2,3-dihydroxy-3-methylbutanoate = 3-methyl-2-oxobutanoate + H2O. It carries out the reaction (2R,3R)-2,3-dihydroxy-3-methylpentanoate = (S)-3-methyl-2-oxopentanoate + H2O. The protein operates within amino-acid biosynthesis; L-isoleucine biosynthesis; L-isoleucine from 2-oxobutanoate: step 3/4. It participates in amino-acid biosynthesis; L-valine biosynthesis; L-valine from pyruvate: step 3/4. Functionally, functions in the biosynthesis of branched-chain amino acids. Catalyzes the dehydration of (2R,3R)-2,3-dihydroxy-3-methylpentanoate (2,3-dihydroxy-3-methylvalerate) into 2-oxo-3-methylpentanoate (2-oxo-3-methylvalerate) and of (2R)-2,3-dihydroxy-3-methylbutanoate (2,3-dihydroxyisovalerate) into 2-oxo-3-methylbutanoate (2-oxoisovalerate), the penultimate precursor to L-isoleucine and L-valine, respectively. The chain is Dihydroxy-acid dehydratase from Chlorobaculum tepidum (strain ATCC 49652 / DSM 12025 / NBRC 103806 / TLS) (Chlorobium tepidum).